The chain runs to 235 residues: Post-translational flagellin modification protein B (235 aa).

It belongs to the CMP-NeuNAc synthase family.

Functionally, required for biosynthesis of LAH modification in the post-translational modification of Campylobacter coli flagellin. In Campylobacter coli, this protein is Post-translational flagellin modification protein B (ptmB).